The sequence spans 496 residues: Histidine--tRNA ligase (496 aa).

Belongs to the class-II aminoacyl-tRNA synthetase family. As to quaternary structure, homodimer.

The protein localises to the cytoplasm. The catalysed reaction is tRNA(His) + L-histidine + ATP = L-histidyl-tRNA(His) + AMP + diphosphate + H(+). In Bartonella bacilliformis (strain ATCC 35685 / KC583 / Herrer 020/F12,63), this protein is Histidine--tRNA ligase.